The chain runs to 202 residues: Large ribosomal subunit protein bL9 (202 aa).

The disordered stretch occupies residues 177–202 (AGEFFDPEAEPDDVAEAGGEQTAEEK). Acidic residues predominate over residues 181–191 (FDPEAEPDDVA).

The protein belongs to the bacterial ribosomal protein bL9 family.

Binds to the 23S rRNA. The polypeptide is Large ribosomal subunit protein bL9 (Nitrobacter hamburgensis (strain DSM 10229 / NCIMB 13809 / X14)).